Consider the following 177-residue polypeptide: tRNA (cytidine(56)-2'-O)-methyltransferase (177 aa).

S-adenosyl-L-methionine contacts are provided by residues Leu83 and 108 to 112 (GAEKV).

The protein belongs to the aTrm56 family. In terms of assembly, homodimer.

It is found in the cytoplasm. It catalyses the reaction cytidine(56) in tRNA + S-adenosyl-L-methionine = 2'-O-methylcytidine(56) in tRNA + S-adenosyl-L-homocysteine + H(+). In terms of biological role, specifically catalyzes the AdoMet-dependent 2'-O-ribose methylation of cytidine at position 56 in tRNAs. In Nitrosopumilus maritimus (strain SCM1), this protein is tRNA (cytidine(56)-2'-O)-methyltransferase.